The primary structure comprises 117 residues: Large ribosomal subunit protein bL20c (117 aa).

Belongs to the bacterial ribosomal protein bL20 family.

The protein resides in the plastid. It localises to the chloroplast. In terms of biological role, binds directly to 23S ribosomal RNA and is necessary for the in vitro assembly process of the 50S ribosomal subunit. It is not involved in the protein synthesizing functions of that subunit. This is Large ribosomal subunit protein bL20c from Carica papaya (Papaya).